Consider the following 141-residue polypeptide: Hemoglobin subunit alpha-1 (141 aa).

One can recognise a Globin domain in the interval 1 to 141; it reads VLSEGNKKAI…VTYQLSSLYR (141 aa). An O2-binding site is contributed by His59. A heme b-binding site is contributed by His88.

It belongs to the globin family. In terms of assembly, heterotetramer of two alpha chains and two beta chains. In terms of tissue distribution, red blood cells.

Involved in oxygen transport from the lung to the various peripheral tissues. This chain is Hemoglobin subunit alpha-1, found in Torpedo marmorata (Marbled electric ray).